We begin with the raw amino-acid sequence, 371 residues long: Repetitive proline-rich cell wall protein 2 (371 aa).

A signal peptide spans 1-22; the sequence is MASSNLLVLLLFALFAIPRGLA. 66 tandem repeats follow at residues 32–36, 37–41, 42–46, 47–51, 52–56, 57–61, 62–66, 67–71, 72–76, 77–81, 82–86, 87–91, 92–96, 97–101, 102–106, 107–111, 112–116, 117–121, 122–126, 127–131, 132–136, 137–141, 142–146, 147–151, 152–156, 157–161, 162–166, 167–171, 172–176, 177–181, 182–186, 187–191, 192–196, 197–201, 202–206, 207–211, 212–216, 217–221, 222–226, 227–231, 232–236, 237–241, 242–246, 247–251, 252–256, 257–261, 262–266, 267–271, 272–276, 277–281, 282–286, 287–291, 292–296, 297–301, 302–306, 307–311, 312–316, 317–321, 322–326, 327–331, 332–336, 337–341, 342–346, 347–351, 352–356, and 357–361. Residues 32 to 366 form a 67 X 5 AA approximate tandem repeats of P-P-[IV]-[EY]-K region; that stretch reads PPVYKPPVEK…PPVEKPPVYG (335 aa). The segment at 49-317 is disordered; it reads VEKPPVYKPP…PVEKPPVYKP (269 aa). Positions 339–371 are disordered; that stretch reads VYKPPVEKPPVYKPPVYKPPVEKPPVYGPPHHP. A 67; approximate repeat occupies 362 to 366; sequence PPVYG.

This sequence belongs to the plant proline-rich protein superfamily. ENOD12 family. As to expression, expressed in hypocotyls, roots and mature root nodules.

The protein localises to the secreted. It is found in the cell wall. Functionally, this is a developmentally regulated putative cell wall protein. This is Repetitive proline-rich cell wall protein 2 (PRP2) from Medicago truncatula (Barrel medic).